The primary structure comprises 933 residues: MQHYDIIRMIGKGGMGEVYLAYDPICSRKVALKRIREDLSDNELLKKRFLREAKIAADLVHPGVVPVFTICSDSDLVYYTMPYIEGYTLKSLLKSVWQCDSLPKDLAEQTSVGTFLSIFHKICSTIEYVHSRGILHRDLKPDNILLGLFSEVVILDWGAALSKEMKEDVLLDLDIPMPGSMFSNMTVPGKIVGTPDYMAPERLRGAPASESTDIYALGVILYQMLTLSFPYRNKKGKKIHVPNHIISPEEVAPHREIPSFLSQVVMRALATDPKERYTSVQALKADIEQHLQGSPQWTPKIALHTQDAECWKFHESILLSKYFPMLEVSPALWYSLAISKIESFSEVRLEYTLLRKGLEGGFGILLPPSENVDHGDFYRGYGFWLHIKKNVLSVSLVRNGLEIQKTSGNIDVNQEKFFIAFEKQNHRLSLNIDHTVWMIHMDYLPGRGGRIGVIIQDITDVCGNIVVLESSGALHVSCLAVPDAFLNEKLYDRAITFYRRIVESFPGRKEGYEAQFRIGIAVLEKAAEEGDQEGFSQALREFSVLHDSVAAPLEYLGKALVYQRLEEYNEEVKSLLLALKRYGQRPEISRVRDHVVDRLHEALYSNHRVSLVFMLLALHVAPESINSSEEEHFLKNLQGKIHDTLFCSLDISPIDFRSSKMELLLSYWSGFTPFLPGLFQRSWDLKDYRALADIFYTAADLGEREFIDVYGNTLRENIQATTFTEDIVEIFPHQLIHFLSALDAIFLHAPVEKIFSDVDILDPVLIIYLFDLFAKDVLIHGKGEQILDAIQVLETYVSPQQRHTYLLPYEILAYLWMKEGKKVHELLSAHYDESFWIEDSHWAFVLYGYWLALTEESSLAYLHLSGCREDHVAPRALIGLFCSPLGICENQWSYQERRNLLLQKFIFFHCLGDDVERDNCRVAYDLLVKERLL.

Positions 4–291 (YDIIRMIGKG…ALKADIEQHL (288 aa)) constitute a Protein kinase domain. Residues 10 to 18 (IGKGGMGEV) and lysine 33 each bind ATP. Aspartate 138 (proton acceptor) is an active-site residue.

It belongs to the protein kinase superfamily. Ser/Thr protein kinase family. Post-translationally, autophosphorylated on serine and threonine residues.

It catalyses the reaction L-seryl-[protein] + ATP = O-phospho-L-seryl-[protein] + ADP + H(+). The enzyme catalyses L-threonyl-[protein] + ATP = O-phospho-L-threonyl-[protein] + ADP + H(+). Its function is as follows. Together with the serine/threonine kinase Pkn1, may play a role in the specific interactions with host proteins during intracellular growth. The sequence is that of Serine/threonine-protein kinase PknD from Chlamydia abortus (strain DSM 27085 / S26/3) (Chlamydophila abortus).